Reading from the N-terminus, the 781-residue chain is Putative UPF0313 protein YPO0674/y3502/YP_2990 (781 aa).

Positions 368-646 constitute a Radical SAM core domain; the sequence is AYDMIRFSIN…KALLRYHDPA (279 aa). [4Fe-4S] cluster contacts are provided by Cys382, Cys386, and Cys389. The disordered stretch occupies residues 681–781; that stretch reads REARRALRHH…AGSRGKNRQH (101 aa). Residues 696-708 are compositionally biased toward polar residues; that stretch reads KHTSITRQRQPSN. The segment covering 726 to 750 has biased composition (low complexity); it reads TSSAHSTSANQSTSANQSTSAAHST.

This sequence belongs to the UPF0313 family. It depends on [4Fe-4S] cluster as a cofactor.

In Yersinia pestis, this protein is Putative UPF0313 protein YPO0674/y3502/YP_2990.